The chain runs to 253 residues: Probable transcriptional regulatory protein slr0989 (253 aa).

The tract at residues M1 to K22 is disordered.

The protein belongs to the TACO1 family.

The protein localises to the cytoplasm. This Synechocystis sp. (strain ATCC 27184 / PCC 6803 / Kazusa) protein is Probable transcriptional regulatory protein slr0989.